The primary structure comprises 581 residues: Adenine deaminase (581 aa).

The protein belongs to the metallo-dependent hydrolases superfamily. Adenine deaminase family. Mn(2+) serves as cofactor.

It carries out the reaction adenine + H2O + H(+) = hypoxanthine + NH4(+). The sequence is that of Adenine deaminase from Lysinibacillus sphaericus (strain C3-41).